We begin with the raw amino-acid sequence, 38 residues long: Large ribosomal subunit protein bL36 (38 aa).

The protein belongs to the bacterial ribosomal protein bL36 family.

In Pseudoalteromonas atlantica (strain T6c / ATCC BAA-1087), this protein is Large ribosomal subunit protein bL36.